Reading from the N-terminus, the 279-residue chain is Shikimate dehydrogenase (NADP(+)) (279 aa).

Shikimate contacts are provided by residues 21 to 23 and Thr-68; that span reads SMS. Residue Lys-72 is the Proton acceptor of the active site. Residues Asn-93 and Asp-108 each coordinate shikimate. NADP(+)-binding positions include 130-134 and Leu-219; that span reads GAGGA. Tyr-221 serves as a coordination point for shikimate. Gly-242 is a binding site for NADP(+).

This sequence belongs to the shikimate dehydrogenase family. Homodimer.

It carries out the reaction shikimate + NADP(+) = 3-dehydroshikimate + NADPH + H(+). Its pathway is metabolic intermediate biosynthesis; chorismate biosynthesis; chorismate from D-erythrose 4-phosphate and phosphoenolpyruvate: step 4/7. Its function is as follows. Involved in the biosynthesis of the chorismate, which leads to the biosynthesis of aromatic amino acids. Catalyzes the reversible NADPH linked reduction of 3-dehydroshikimate (DHSA) to yield shikimate (SA). The chain is Shikimate dehydrogenase (NADP(+)) from Oleidesulfovibrio alaskensis (strain ATCC BAA-1058 / DSM 17464 / G20) (Desulfovibrio alaskensis).